A 335-amino-acid polypeptide reads, in one-letter code: Phosphate acyltransferase (335 aa).

This sequence belongs to the PlsX family. Homodimer. Probably interacts with PlsY.

It is found in the cytoplasm. The catalysed reaction is a fatty acyl-[ACP] + phosphate = an acyl phosphate + holo-[ACP]. The protein operates within lipid metabolism; phospholipid metabolism. Functionally, catalyzes the reversible formation of acyl-phosphate (acyl-PO(4)) from acyl-[acyl-carrier-protein] (acyl-ACP). This enzyme utilizes acyl-ACP as fatty acyl donor, but not acyl-CoA. This is Phosphate acyltransferase from Clostridium botulinum (strain ATCC 19397 / Type A).